A 228-amino-acid chain; its full sequence is Urease accessory protein UreF (228 aa).

It belongs to the UreF family. As to quaternary structure, ureD, UreF and UreG form a complex that acts as a GTP-hydrolysis-dependent molecular chaperone, activating the urease apoprotein by helping to assemble the nickel containing metallocenter of UreC. The UreE protein probably delivers the nickel.

The protein resides in the cytoplasm. Functionally, required for maturation of urease via the functional incorporation of the urease nickel metallocenter. This chain is Urease accessory protein UreF, found in Yersinia pestis bv. Antiqua (strain Antiqua).